The following is a 135-amino-acid chain: Large ribosomal subunit protein uL16c (135 aa).

It belongs to the universal ribosomal protein uL16 family. As to quaternary structure, part of the 50S ribosomal subunit.

It is found in the plastid. The protein resides in the chloroplast. This is Large ribosomal subunit protein uL16c from Cucumis sativus (Cucumber).